Reading from the N-terminus, the 500-residue chain is Galactofuranose transporter ATP-binding protein YtfR (500 aa).

2 ABC transporter domains span residues 10 to 245 and 259 to 497; these read LRTE…LGRE and LSDK…IMNA. 42 to 49 contacts ATP; that stretch reads GENGAGKS.

The protein belongs to the ABC transporter superfamily. In terms of assembly, the complex is composed of two ATP-binding proteins (YtfR), two transmembrane proteins (YtfT and YjfF) and a solute-binding protein (YtfQ).

The protein resides in the cell inner membrane. The enzyme catalyses D-galactofuranose(out) + ATP + H2O = D-galactofuranose(in) + ADP + phosphate + H(+). Functionally, part of the ABC transporter complex YtfQRT-YjfF involved in galactofuranose transport. Responsible for energy coupling to the transport system. The sequence is that of Galactofuranose transporter ATP-binding protein YtfR (ytfR) from Escherichia coli (strain K12).